A 186-amino-acid chain; its full sequence is MIAIIDYGSGNLASVEKALHGVVTSDPYKIDMADKIVFPGAGSFSAAVSGIKNIRDIIIEKIRNGTPYLGICLGLEILFSESEEGPGTGLSFFNERLKRFKKGIHMGWNTVEFNDNIIFSGIKKGEYFYFVHRYYAPLGSYTCGKTFFNGYFTSFININNIYAVQFHPEKSGEPGLKLLRNFGELA.

Positions 1-186 (MIAIIDYGSG…KLLRNFGELA (186 aa)) constitute a Glutamine amidotransferase type-1 domain. Cys-72 functions as the Nucleophile in the catalytic mechanism. Active-site residues include His-167 and Glu-169.

In terms of assembly, heterodimer of HisH and HisF.

It is found in the cytoplasm. It catalyses the reaction 5-[(5-phospho-1-deoxy-D-ribulos-1-ylimino)methylamino]-1-(5-phospho-beta-D-ribosyl)imidazole-4-carboxamide + L-glutamine = D-erythro-1-(imidazol-4-yl)glycerol 3-phosphate + 5-amino-1-(5-phospho-beta-D-ribosyl)imidazole-4-carboxamide + L-glutamate + H(+). It carries out the reaction L-glutamine + H2O = L-glutamate + NH4(+). Its pathway is amino-acid biosynthesis; L-histidine biosynthesis; L-histidine from 5-phospho-alpha-D-ribose 1-diphosphate: step 5/9. IGPS catalyzes the conversion of PRFAR and glutamine to IGP, AICAR and glutamate. The HisH subunit catalyzes the hydrolysis of glutamine to glutamate and ammonia as part of the synthesis of IGP and AICAR. The resulting ammonia molecule is channeled to the active site of HisF. This is Imidazole glycerol phosphate synthase subunit HisH from Picrophilus torridus (strain ATCC 700027 / DSM 9790 / JCM 10055 / NBRC 100828 / KAW 2/3).